A 490-amino-acid chain; its full sequence is Glycogen synthase kinase-3 alpha (490 aa).

A compositionally biased stretch (gly residues) spans Met-1 to Gly-15. A disordered region spans residues Met-1 to Ser-97. Ser-2 carries the N-acetylserine modification. The residue at position 2 (Ser-2) is a Phosphoserine. Ser-21 is modified (phosphoserine; by PKB/AKT1). Residues Pro-25–Ala-82 are compositionally biased toward gly residues. Residues Ser-72, Ser-77, and Ser-97 each carry the phosphoserine modification. The Protein kinase domain maps to Tyr-119–Phe-404. ATP is bound by residues Ile-125–Val-133 and Lys-148. Asp-244 acts as the Proton acceptor in catalysis. Tyr-279 is modified (phosphotyrosine). The interval Gly-451–Ser-490 is disordered. Residues Pro-455–Asp-480 are compositionally biased toward polar residues. Low complexity predominate over residues Ala-481–Ser-490.

This sequence belongs to the protein kinase superfamily. CMGC Ser/Thr protein kinase family. GSK-3 subfamily. As to quaternary structure, monomer. Interacts with AXIN1 and CTNNB1/beta-catenin. Interacts with ARRB2. Interacts with CTNND2. Interacts with LMBR1L. Interacts with DDX3X. Interacts with TNFRSF10B. Phosphorylated by AKT1 at Ser-21: upon insulin-mediated signaling, the activated PKB/AKT1 protein kinase phosphorylates and deactivates GSK3A, resulting in the dephosphorylation and activation of GYS1. Activated by phosphorylation at Tyr-279.

The enzyme catalyses L-seryl-[tau protein] + ATP = O-phospho-L-seryl-[tau protein] + ADP + H(+). It carries out the reaction L-threonyl-[tau protein] + ATP = O-phospho-L-threonyl-[tau protein] + ADP + H(+). It catalyses the reaction L-seryl-[protein] + ATP = O-phospho-L-seryl-[protein] + ADP + H(+). The catalysed reaction is L-threonyl-[protein] + ATP = O-phospho-L-threonyl-[protein] + ADP + H(+). Its activity is regulated as follows. Activated by phosphorylation at Tyr-279. In response to insulin, inhibited by phosphorylation at Ser-21 by PKB/AKT1; phosphorylation at this site causes a conformational change, preventing access of substrates to the active site. Inhibited by lithium. Its function is as follows. Constitutively active protein kinase that acts as a negative regulator in the hormonal control of glucose homeostasis, Wnt signaling and regulation of transcription factors and microtubules, by phosphorylating and inactivating glycogen synthase (GYS1 or GYS2), CTNNB1/beta-catenin, APC and AXIN1. Requires primed phosphorylation of the majority of its substrates. Contributes to insulin regulation of glycogen synthesis by phosphorylating and inhibiting GYS1 activity and hence glycogen synthesis. Regulates glycogen metabolism in liver, but not in muscle. May also mediate the development of insulin resistance by regulating activation of transcription factors. In Wnt signaling, regulates the level and transcriptional activity of nuclear CTNNB1/beta-catenin. Facilitates amyloid precursor protein (APP) processing and the generation of APP-derived amyloid plaques found in Alzheimer disease. May be involved in the regulation of replication in pancreatic beta-cells. Is necessary for the establishment of neuronal polarity and axon outgrowth. Through phosphorylation of the anti-apoptotic protein MCL1, may control cell apoptosis in response to growth factors deprivation. Acts as a regulator of autophagy by mediating phosphorylation of KAT5/TIP60 under starvation conditions, activating KAT5/TIP60 acetyltransferase activity and promoting acetylation of key autophagy regulators, such as ULK1 and RUBCNL/Pacer. Negatively regulates extrinsic apoptotic signaling pathway via death domain receptors. Promotes the formation of an anti-apoptotic complex, made of DDX3X, BRIC2 and GSK3B, at death receptors, including TNFRSF10B. The anti-apoptotic function is most effective with weak apoptotic signals and can be overcome by stronger stimulation. This Mus musculus (Mouse) protein is Glycogen synthase kinase-3 alpha (Gsk3a).